The primary structure comprises 121 residues: Iron-sulfur cluster assembly protein CyaY (121 aa).

The protein belongs to the frataxin family.

Its function is as follows. Involved in iron-sulfur (Fe-S) cluster assembly. May act as a regulator of Fe-S biogenesis. The chain is Iron-sulfur cluster assembly protein CyaY from Buchnera aphidicola subsp. Schizaphis graminum (strain Sg).